A 914-amino-acid polypeptide reads, in one-letter code: Neutral alpha-glucosidase C (914 aa).

Aspartate 511 (nucleophile) is an active-site residue. Residue glutamate 514 is part of the active site. Aspartate 587 (proton donor) is an active-site residue.

The protein belongs to the glycosyl hydrolase 31 family.

It catalyses the reaction Hydrolysis of terminal, non-reducing (1-&gt;4)-linked alpha-D-glucose residues with release of alpha-D-glucose.. In terms of biological role, has alpha-glucosidase activity. The sequence is that of Neutral alpha-glucosidase C (GANC) from Homo sapiens (Human).